Reading from the N-terminus, the 594-residue chain is Jacalin-related lectin 44 (594 aa).

The segment at 1–23 is disordered; that stretch reads MIQKLGAKGIKSDERNQREWDDG. Jacalin-type lectin domains lie at 2–148, 151–293, 296–441, and 448–588; these read IQKL…YFIS, PTRL…YFST, PNKL…YYRP, and VKRL…HVIP. Basic and acidic residues predominate over residues 10 to 23; it reads IKSDERNQREWDDG.

Belongs to the jacalin lectin family.

In Arabidopsis thaliana (Mouse-ear cress), this protein is Jacalin-related lectin 44 (JAL44).